Reading from the N-terminus, the 426-residue chain is Probable imidazolonepropionase (426 aa).

The 4-imidazolone-5-propanoate site is built by Y159 and H192. N-formimidoyl-L-glutamate is bound at residue Y159. H260 lines the Fe(3+) pocket. A Zn(2+)-binding site is contributed by H260. A 4-imidazolone-5-propanoate-binding site is contributed by E263. Residue D334 participates in Fe(3+) binding. D334 lines the Zn(2+) pocket. N336 contributes to the N-formimidoyl-L-glutamate binding site.

It belongs to the metallo-dependent hydrolases superfamily. HutI family. The cofactor is Zn(2+). Fe(3+) is required as a cofactor.

It carries out the reaction 4-imidazolone-5-propanoate + H2O = N-formimidoyl-L-glutamate. It functions in the pathway amino-acid degradation; L-histidine degradation into L-glutamate; N-formimidoyl-L-glutamate from L-histidine: step 3/3. This is Probable imidazolonepropionase (Amdhd1) from Mus musculus (Mouse).